A 453-amino-acid polypeptide reads, in one-letter code: Homogentisate 1,2-dioxygenase (453 aa).

Basic and acidic residues predominate over residues 1-12 (MLEKAERQRKAA). The tract at residues 1 to 43 (MLEKAERQRKAAPDQQRSAGYMPGFGNDFETESLPGSLPQGQN) is disordered. His306 functions as the Proton acceptor in the catalytic mechanism. Positions 349 and 355 each coordinate Fe cation. The homogentisate site is built by Tyr364 and His385. Fe cation is bound at residue His385.

Belongs to the homogentisate dioxygenase family. In terms of assembly, hexamer; dimer of trimers. Fe cation is required as a cofactor.

It carries out the reaction homogentisate + O2 = 4-maleylacetoacetate + H(+). The protein operates within amino-acid degradation; L-phenylalanine degradation; acetoacetate and fumarate from L-phenylalanine: step 4/6. In terms of biological role, involved in the catabolism of homogentisate (2,5-dihydroxyphenylacetate or 2,5-OH-PhAc), a central intermediate in the degradation of phenylalanine and tyrosine. Catalyzes the oxidative ring cleavage of the aromatic ring of homogentisate to yield maleylacetoacetate. This chain is Homogentisate 1,2-dioxygenase, found in Sinorhizobium medicae (strain WSM419) (Ensifer medicae).